The sequence spans 248 residues: Large ribosomal subunit protein uL30 (248 aa).

The residue at position 1 (M1) is an N-acetylmethionine. 4 tandem repeats follow at residues 7–18, 19–30, 31–42, and 43–54. A 4 X 12 AA tandem repeats region spans residues 7 to 54; that stretch reads KKKKVPAVPETLKKKRKNFAELKIKRLRKKFAQKMLRKARRKLIYEKA. T17 carries the post-translational modification Phosphothreonine. The residue at position 124 (K124) is an N6-acetyllysine. An N6-succinyllysine modification is found at K127. Y139 is modified (phosphotyrosine).

It belongs to the universal ribosomal protein uL30 family. In terms of assembly, component of the large ribosomal subunit. Homodimer. Interacts with DHX33.

The protein localises to the cytoplasm. Component of the large ribosomal subunit. The ribosome is a large ribonucleoprotein complex responsible for the synthesis of proteins in the cell. Binds to G-rich structures in 28S rRNA and in mRNAs. Plays a regulatory role in the translation apparatus; inhibits cell-free translation of mRNAs. The sequence is that of Large ribosomal subunit protein uL30 (RPL7) from Bos taurus (Bovine).